Reading from the N-terminus, the 246-residue chain is Ribonuclease 3 (246 aa).

The RNase III domain occupies 18–147; it reads FQELQNKIGI…FIGALYLDQG (130 aa). Glu-60 contributes to the Mg(2+) binding site. The active site involves Asp-64. 2 residues coordinate Mg(2+): Asp-133 and Glu-136. Glu-136 is an active-site residue. One can recognise a DRBM domain in the interval 173 to 242; it reads DFKSQLQELV…AQMALETLRA (70 aa).

It belongs to the ribonuclease III family. As to quaternary structure, homodimer. Requires Mg(2+) as cofactor.

It is found in the cytoplasm. The enzyme catalyses Endonucleolytic cleavage to 5'-phosphomonoester.. In terms of biological role, digests double-stranded RNA. Involved in the processing of primary rRNA transcript to yield the immediate precursors to the large and small rRNAs (23S and 16S). Processes some mRNAs, and tRNAs when they are encoded in the rRNA operon. Processes pre-crRNA and tracrRNA of type II CRISPR loci if present in the organism. This is Ribonuclease 3 from Geobacillus kaustophilus (strain HTA426).